A 463-amino-acid chain; its full sequence is Elongation factor 1-alpha (463 aa).

Positions Lys-5–Thr-242 constitute a tr-type G domain. Residues Gly-14 to Ser-21 are G1. A GTP-binding site is contributed by Gly-14–Ser-21. The tract at residues Gly-70 to Asp-74 is G2. Residues Asp-91–Gly-94 form a G3 region. Residues Asp-91–His-95 and Asn-153–Asp-156 each bind GTP. Residues Asn-153–Asp-156 are G4. The segment at Ser-194–Trp-196 is G5. 2 positions are modified to 5-glutamyl glycerylphosphorylethanolamine: Glu-301 and Glu-374.

The protein belongs to the TRAFAC class translation factor GTPase superfamily. Classic translation factor GTPase family. EF-Tu/EF-1A subfamily.

The protein resides in the cytoplasm. Functionally, this protein promotes the GTP-dependent binding of aminoacyl-tRNA to the A-site of ribosomes during protein biosynthesis. The sequence is that of Elongation factor 1-alpha from Bombyx mori (Silk moth).